The chain runs to 195 residues: Phosphoheptose isomerase (195 aa).

The SIS domain occupies 36–195 (LVDSLKGDGI…IIEKELFGLD (160 aa)). Position 51-53 (51-53 (NGG)) interacts with substrate. Zn(2+) is bound by residues histidine 60 and glutamate 64. Substrate-binding positions include glutamate 64, 95 to 96 (ND), 121 to 123 (TTS), serine 126, and glutamine 173. Residues glutamine 173 and histidine 181 each coordinate Zn(2+).

This sequence belongs to the SIS family. GmhA subfamily. It depends on Zn(2+) as a cofactor.

The protein localises to the cytoplasm. It catalyses the reaction 2 D-sedoheptulose 7-phosphate = D-glycero-alpha-D-manno-heptose 7-phosphate + D-glycero-beta-D-manno-heptose 7-phosphate. The protein operates within carbohydrate biosynthesis; D-glycero-D-manno-heptose 7-phosphate biosynthesis; D-glycero-alpha-D-manno-heptose 7-phosphate and D-glycero-beta-D-manno-heptose 7-phosphate from sedoheptulose 7-phosphate: step 1/1. Functionally, catalyzes the isomerization of sedoheptulose 7-phosphate in D-glycero-D-manno-heptose 7-phosphate. This is Phosphoheptose isomerase from Leptospira biflexa serovar Patoc (strain Patoc 1 / Ames).